Consider the following 449-residue polypeptide: 3-phosphoshikimate 1-carboxyvinyltransferase (449 aa).

The tract at residues 1–30 is disordered; that stretch reads MSHDSSPQPLTAAPGAPLRGRLRPPGDKSI. 3-phosphoshikimate is bound by residues Lys-28, Ser-29, and Arg-33. Lys-28 contributes to the phosphoenolpyruvate binding site. Phosphoenolpyruvate contacts are provided by Gly-101 and Arg-129. Residues Ser-175, Gln-177, Asp-330, and Lys-357 each coordinate 3-phosphoshikimate. Gln-177 is a phosphoenolpyruvate binding site. Asp-330 serves as the catalytic Proton acceptor. Phosphoenolpyruvate contacts are provided by Arg-361 and Arg-405.

This sequence belongs to the EPSP synthase family. Monomer.

Its subcellular location is the cytoplasm. It catalyses the reaction 3-phosphoshikimate + phosphoenolpyruvate = 5-O-(1-carboxyvinyl)-3-phosphoshikimate + phosphate. The protein operates within metabolic intermediate biosynthesis; chorismate biosynthesis; chorismate from D-erythrose 4-phosphate and phosphoenolpyruvate: step 6/7. Functionally, catalyzes the transfer of the enolpyruvyl moiety of phosphoenolpyruvate (PEP) to the 5-hydroxyl of shikimate-3-phosphate (S3P) to produce enolpyruvyl shikimate-3-phosphate and inorganic phosphate. The chain is 3-phosphoshikimate 1-carboxyvinyltransferase from Methylobacterium radiotolerans (strain ATCC 27329 / DSM 1819 / JCM 2831 / NBRC 15690 / NCIMB 10815 / 0-1).